We begin with the raw amino-acid sequence, 588 residues long: MFS siderochrome iron transporter 1 (588 aa).

The next 13 helical transmembrane spans lie at 60-80, 104-124, 133-153, 161-181, 191-211, 225-245, 278-298, 307-327, 348-368, 385-405, 413-433, 440-460, and 473-495; these read QVWS…ITFV, LTAS…LPLA, PQGF…MAAC, AAQV…SIFI, ALMF…GGPL, YGAF…VFAW, IIGI…FSLY, SSLV…FALY, LGAC…DSYF, YIVN…GILV, WLAL…MITF, IGYI…CVIT, and YVAV…GQTV. Residue asparagine 519 is glycosylated (N-linked (GlcNAc...) asparagine). The chain crosses the membrane as a helical span at residues 552–572; the sequence is KYMLIGGTAILAVGLGATMMW.

Belongs to the major facilitator superfamily.

It is found in the membrane. Its function is as follows. Major facilitator transporter involved in siderophore transport. This chain is MFS siderochrome iron transporter 1, found in Ajellomyces capsulatus (Darling's disease fungus).